The chain runs to 280 residues: 2-dehydro-3-deoxyphosphooctonate aldolase (280 aa).

It belongs to the KdsA family.

It localises to the cytoplasm. It catalyses the reaction D-arabinose 5-phosphate + phosphoenolpyruvate + H2O = 3-deoxy-alpha-D-manno-2-octulosonate-8-phosphate + phosphate. Its pathway is carbohydrate biosynthesis; 3-deoxy-D-manno-octulosonate biosynthesis; 3-deoxy-D-manno-octulosonate from D-ribulose 5-phosphate: step 2/3. The protein operates within bacterial outer membrane biogenesis; lipopolysaccharide biosynthesis. The chain is 2-dehydro-3-deoxyphosphooctonate aldolase from Neisseria meningitidis serogroup A / serotype 4A (strain DSM 15465 / Z2491).